Here is a 957-residue protein sequence, read N- to C-terminus: Glycine dehydrogenase (decarboxylating) (957 aa).

An N6-(pyridoxal phosphate)lysine modification is found at lysine 702.

Belongs to the GcvP family. As to quaternary structure, the glycine cleavage system is composed of four proteins: P, T, L and H. Requires pyridoxal 5'-phosphate as cofactor.

The catalysed reaction is N(6)-[(R)-lipoyl]-L-lysyl-[glycine-cleavage complex H protein] + glycine + H(+) = N(6)-[(R)-S(8)-aminomethyldihydrolipoyl]-L-lysyl-[glycine-cleavage complex H protein] + CO2. In terms of biological role, the glycine cleavage system catalyzes the degradation of glycine. The P protein binds the alpha-amino group of glycine through its pyridoxal phosphate cofactor; CO(2) is released and the remaining methylamine moiety is then transferred to the lipoamide cofactor of the H protein. The sequence is that of Glycine dehydrogenase (decarboxylating) from Bradyrhizobium sp. (strain ORS 278).